The sequence spans 1511 residues: DNA-directed RNA polymerase subunit beta' (1511 aa).

Positions 75, 77, 90, and 93 each coordinate Zn(2+). Mg(2+)-binding residues include Asp474, Asp476, and Asp478. Zn(2+)-binding residues include Cys804, Cys878, Cys885, and Cys888.

The protein belongs to the RNA polymerase beta' chain family. In terms of assembly, the RNAP catalytic core consists of 2 alpha, 1 beta, 1 beta' and 1 omega subunit. When a sigma factor is associated with the core the holoenzyme is formed, which can initiate transcription. Mg(2+) is required as a cofactor. The cofactor is Zn(2+).

It catalyses the reaction RNA(n) + a ribonucleoside 5'-triphosphate = RNA(n+1) + diphosphate. DNA-dependent RNA polymerase catalyzes the transcription of DNA into RNA using the four ribonucleoside triphosphates as substrates. This is DNA-directed RNA polymerase subunit beta' from Aliarcobacter butzleri (strain RM4018) (Arcobacter butzleri).